An 83-amino-acid chain; its full sequence is Large ribosomal subunit protein uL24 (83 aa).

This sequence belongs to the universal ribosomal protein uL24 family. In terms of assembly, part of the 50S ribosomal subunit.

Its function is as follows. One of two assembly initiator proteins, it binds directly to the 5'-end of the 23S rRNA, where it nucleates assembly of the 50S subunit. In terms of biological role, one of the proteins that surrounds the polypeptide exit tunnel on the outside of the subunit. The protein is Large ribosomal subunit protein uL24 of Symbiobacterium thermophilum (strain DSM 24528 / JCM 14929 / IAM 14863 / T).